Reading from the N-terminus, the 429-residue chain is Probable M18 family aminopeptidase 2 (429 aa).

Residues histidine 82, histidine 156, and histidine 401 each coordinate Zn(2+).

It belongs to the peptidase M18 family. Zn(2+) is required as a cofactor.

This Pseudomonas savastanoi pv. phaseolicola (strain 1448A / Race 6) (Pseudomonas syringae pv. phaseolicola (strain 1448A / Race 6)) protein is Probable M18 family aminopeptidase 2.